Consider the following 111-residue polypeptide: Ribonuclease P protein component (111 aa).

This sequence belongs to the RnpA family. As to quaternary structure, consists of a catalytic RNA component (M1 or rnpB) and a protein subunit.

It carries out the reaction Endonucleolytic cleavage of RNA, removing 5'-extranucleotides from tRNA precursor.. Functionally, RNaseP catalyzes the removal of the 5'-leader sequence from pre-tRNA to produce the mature 5'-terminus. It can also cleave other RNA substrates such as 4.5S RNA. The protein component plays an auxiliary but essential role in vivo by binding to the 5'-leader sequence and broadening the substrate specificity of the ribozyme. This is Ribonuclease P protein component from Clostridium botulinum (strain Okra / Type B1).